Here is a 401-residue protein sequence, read N- to C-terminus: Deubiquitinase and deneddylase Dub1 (401 aa).

Polar residues predominate over residues M1 to T11. Residues M1 to L24 are disordered. The helical transmembrane segment at T40–F60 threads the bilayer. The tract at residues K77 to P130 is disordered. Over residues V86 to P128 the composition is skewed to pro residues. Residues H275, D292, and C345 contribute to the active site.

This sequence belongs to the peptidase C48 family. Binds to host NFKBIA.

It is found in the secreted. The protein localises to the host cell. It localises to the membrane. Functionally, effector proteins function to alter host cell physiology and promote bacterial survival in host tissues. This protease possesses deubiquitinating and deneddylating activities. Impairs ubiquitination and degradation of NF-kappa-B inhibitor alpha (NFKBIA), thereby preventing NF-kappa-B activation. This chain is Deubiquitinase and deneddylase Dub1 (cdu1), found in Chlamydia trachomatis serovar L2 (strain ATCC VR-902B / DSM 19102 / 434/Bu).